Here is a 171-residue protein sequence, read N- to C-terminus: uncharacterized protein (171 aa).

This is an uncharacterized protein from Bacillus subtilis (strain 168).